We begin with the raw amino-acid sequence, 72 residues long: Crustacean hyperglycemic hormone (72 aa).

Intrachain disulfides connect Cys-7-Cys-43, Cys-23-Cys-39, and Cys-26-Cys-52. Val-72 carries the valine amide modification.

The protein localises to the secreted. In terms of biological role, hormone found in the sinus gland of isopods and decapods which controls the blood sugar level. Has a secretagogue action over the amylase released from the midgut gland. May act as a stress hormone and may be involved in the control of molting and reproduction. This is Crustacean hyperglycemic hormone from Penaeus schmitti (White shrimp).